The following is a 190-amino-acid chain: FMN reductase (NADH) RutF (190 aa).

This sequence belongs to the non-flavoprotein flavin reductase family. RutF subfamily.

The catalysed reaction is FMNH2 + NAD(+) = FMN + NADH + 2 H(+). Catalyzes the reduction of FMN to FMNH2 which is used to reduce pyrimidine by RutA via the Rut pathway. The chain is FMN reductase (NADH) RutF from Pantoea ananatis (strain LMG 20103).